The primary structure comprises 217 residues: Trimethylamine corrinoid protein 2 (217 aa).

Residues Met1–Thr92 form the B12-binding N-terminal domain. Residues Leu94–Ser217 enclose the B12-binding domain. His107 lines the methylcob(III)alamin pocket.

This sequence belongs to the methylamine corrinoid protein family. In terms of assembly, can form a complex with MttB.

Its pathway is one-carbon metabolism; methanogenesis from trimethylamine. Functionally, acts probably as a methyl group carrier between MttB and either MtbA or MtaA. This chain is Trimethylamine corrinoid protein 2 (mttC2), found in Methanosarcina acetivorans (strain ATCC 35395 / DSM 2834 / JCM 12185 / C2A).